We begin with the raw amino-acid sequence, 911 residues long: Protein translocase subunit SecA (911 aa).

ATP is bound by residues Q87, 105–109, and D513; that span reads GEGKT. The disordered stretch occupies residues 853–911; that stretch reads IQLQHEQVSGLEPEAGEAPSAGEPRSEQPYVRAGRKVGRNDPCPCGSGKKFKACHGKLG. Residues 862–875 are compositionally biased toward low complexity; sequence GLEPEAGEAPSAGE. 4 residues coordinate Zn(2+): C895, C897, C906, and H907. The span at 901-911 shows a compositional bias: basic residues; it reads KKFKACHGKLG.

It belongs to the SecA family. As to quaternary structure, monomer and homodimer. Part of the essential Sec protein translocation apparatus which comprises SecA, SecYEG and auxiliary proteins SecDF-YajC and YidC. Zn(2+) serves as cofactor.

It is found in the cell inner membrane. The protein localises to the cytoplasm. The enzyme catalyses ATP + H2O + cellular proteinSide 1 = ADP + phosphate + cellular proteinSide 2.. Part of the Sec protein translocase complex. Interacts with the SecYEG preprotein conducting channel. Has a central role in coupling the hydrolysis of ATP to the transfer of proteins into and across the cell membrane, serving both as a receptor for the preprotein-SecB complex and as an ATP-driven molecular motor driving the stepwise translocation of polypeptide chains across the membrane. The polypeptide is Protein translocase subunit SecA (Teredinibacter turnerae (strain ATCC 39867 / T7901)).